The chain runs to 278 residues: Poly(3-hydroxyoctanoate) depolymerase (278 aa).

Positions 1–33 (MPLRTLLCGLLLAVCLGQHALAASRCSERPRTL) are cleaved as a signal peptide.

The protein resides in the secreted. The enzyme catalyses Hydrolyzes the polyester poly{oxycarbonyl[(R)-2-pentylethylene]} to oligomers.. Functionally, hydrolysis of poly(3-hydroxyoctanoic acid). The sequence is that of Poly(3-hydroxyoctanoate) depolymerase (phaZ) from Pseudomonas fluorescens.